The primary structure comprises 816 residues: MKFAIAFLACVAVVTATAYHKTHDIKVADKAFLMKQKFLFEIVYRVEDPLMFEEYIAMGKQFYFDKEHYTHFDLYMEKFFEAHKAHALLPKGEFFGALVKHHAKQARGLFNFFYYAKDWETFMTNVAFARMHFNEGMFVYALTLAVIHRDDFHGLVLPAIHEIFPQFFFNSKFVMEAEKFDYEMWMKTSLYEKEYMDVYHKIPTFSSYEHGYKQGMAYGYGKTHGHGQTYEHEFGSMYQTSDYMYMKDFKTWQWWKLMGLGEHWYSESNYILRENIYEYNQESNWLTMMKDVKKFYMPVDYSRDLYLYNEESKLSYFTEDLGWNSYWYYLNMDYSFFLDGKTFGLQNDRRGEWWLYNVHQLLSRYHMERLSHGLGEIPQFSWFHQIEMGYDPQLIYYNGIGYSYRKNYYELETYGNFEMLDKITGFQQRIQNIVELGYYQTTDGHMIDLRKPESIEIIGNMLQGNVDAIDNIFFQFWYMLAHMYFADTHYYQMEVYPNVMLNFETMMRDPMFYMFYKSIAQVYFQFMHHLPKYTKEQLLMPGVTLKHVEVSELVTYFDLVDFDVTNMLNGKMVFHEGQFLWDKSLFARQMRLNHKPFSYTYTIDSARDEKVVIRAFLGPKFDEYGRMISLTDNRMNFMEIDEFTYTLKTGSNLITRKSTDFAWTVKDRTTYTELYYYTMMAFDGKYDYPLDLTEPHCGFPDRLVLPMGWKKGMPMQMFFMVVPYMAPQHEQFSTFDYTYSCGIGSGARHVDSLPFGYPFDREINEYEFHVPNMYFKDVTIYHADTMEKYYNYKEYTNYGHFDYSFFNDYYTKYFKL.

The first 16 residues, 1–16, serve as a signal peptide directing secretion; that stretch reads MKFAIAFLACVAVVTA.

It belongs to the hemocyanin family. As to quaternary structure, heterohexamer, composed of three subunits, alpha, beta and gamma. In terms of tissue distribution, larval hemolymph.

It localises to the secreted. Its subcellular location is the extracellular space. Larval storage protein (LSP) which may serve as a store of amino acids for synthesis of adult proteins. In Drosophila melanogaster (Fruit fly), this protein is Larval serum protein 1 alpha chain (Lsp1alpha).